The primary structure comprises 90 residues: Cell division topological specificity factor (90 aa).

It belongs to the MinE family.

Prevents the cell division inhibition by proteins MinC and MinD at internal division sites while permitting inhibition at polar sites. This ensures cell division at the proper site by restricting the formation of a division septum at the midpoint of the long axis of the cell. The sequence is that of Cell division topological specificity factor from Francisella tularensis subsp. tularensis (strain FSC 198).